Consider the following 111-residue polypeptide: Viscotoxin-A3 (111 aa).

Positions 1–26 (MEVVRGSSLVLLVLLLGALLVSQVES) are cleaved as a signal peptide. 3 cysteine pairs are disulfide-bonded: C29/C66, C30/C58, and C42/C52. Residues 73–111 (FYCTLGCESSQCATNSNGDAEAVRCKTACSDLCQDVDDA) constitute a propeptide, acidic domain.

This sequence belongs to the plant thionin (TC 1.C.44) family.

It localises to the secreted. Its function is as follows. Thionins are small plant proteins which are toxic to animal cells. They seem to exert their toxic effect at the level of the cell membrane. Their precise function is not known. In Viscum album (European mistletoe), this protein is Viscotoxin-A3 (THI2.1).